A 350-amino-acid chain; its full sequence is METTIFQFQKTFFTKPPKERVFVLHGEEQYLIRTFLSKLKEKYGENYTVLWGDEISEEEFYTALSETSIFGGSKEKAVVIYNFGDFLKKLGRKKKEKERLIKVLRNVKSNYVFIVYDAKLQKQELSSEPLKSVASFGGIVVANRLSKERIKQLVLKKFKEKGINVENDALEYLLQLTGYNLMELKLEVEKLIDYASEKKILTLDEVKRVAFSVSENVNVFEFVDLLLLKDYEKALKVLDSLISFGIHPLQIMKILSSYALKLYTLKRLEEKGEDLNKAMESVGIKNNFLKMKFKSYLKANSKEDLKNLILSLQRIDAFSKLYFQDTVQLLRDFLTSRLEREVVKNTSHGG.

Belongs to the DNA polymerase HolA subunit family. In terms of assembly, component of the DNA clamp loading complex consisting of tau(3):delta(1):delta'(1). The DNA polymerase III holoenzyme complex contains at least 10 different subunits organized into 3 functionally essential subassemblies: the Pol III core, the beta sliding clamp processivity factor and the clamp-loading complex. The Pol III core (subunits alpha, epsilon and theta) contains the polymerase and the 3'-5' exonuclease proofreading activities. The polymerase is tethered to the template via the dimeric beta sliding clamp processivity factor. The DNA clamp-loading complex assembles the beta sliding clamp onto the primed template and plays a central role in the organization and communication at the replication fork.

The catalysed reaction is DNA(n) + a 2'-deoxyribonucleoside 5'-triphosphate = DNA(n+1) + diphosphate. In terms of biological role, part of the beta sliding clamp loading complex, which hydrolyzes ATP to load the beta clamp onto primed DNA to form the DNA replication pre-initiation complex. DNA polymerase III is a complex, multichain enzyme responsible for most of the replicative synthesis in bacteria. This DNA polymerase also exhibits 3'-5' exonuclease activity. The delta subunit is the wrench that will open the beta subunit dimer. The DNA clamp loading complex (tau(3),delta,delta') is thought to load beta dimers onto DNA by binding ATP which alters the complex's conformation so it can bind beta sliding clamp dimers and open them at one interface. Primed DNA is recognized, ATP is hydrolyzed releasing the clamp loading complex and closing the beta sliding clamp ring around the primed DNA. This is Probable DNA polymerase III subunit delta from Aquifex aeolicus (strain VF5).